Consider the following 200-residue polypeptide: Nitrile hydratase subunit alpha (200 aa).

Fe(3+) is bound by residues Cys105, Cys108, Ser109, and Cys110. Cys108 bears the Cysteine sulfinic acid (-SO2H) mark. Residue Cys110 is modified to Cysteine sulfenic acid (-SOH).

The protein belongs to the nitrile hydratase subunit alpha family. Heterodimer of an alpha and a beta chain. Requires Fe(3+) as cofactor. Oxidation on Cys-108 is essential for the activity. In terms of processing, oxidation on Cys-110 stabilizes the Fe-NO ligand coordinated in the inactive form.

It catalyses the reaction an aliphatic primary amide = an aliphatic nitrile + H2O. Inactivated by oxidation of Cys-110 to a sulfenic acid. Functionally, NHase catalyzes the hydration of various nitrile compounds to the corresponding amides. Industrial production of acrylamide is now being developed using some of the enzymes of this class. The polypeptide is Nitrile hydratase subunit alpha (nthA) (Pseudomonas chlororaphis (Pseudomonas aureofaciens)).